The primary structure comprises 93 residues: CRISPR-associated endoribonuclease Cas2 (93 aa).

A Mg(2+)-binding site is contributed by D8.

It belongs to the CRISPR-associated endoribonuclease Cas2 protein family. Homodimer, forms a heterotetramer with a Cas1 homodimer. The cofactor is Mg(2+).

Its function is as follows. CRISPR (clustered regularly interspaced short palindromic repeat), is an adaptive immune system that provides protection against mobile genetic elements (viruses, transposable elements and conjugative plasmids). CRISPR clusters contain sequences complementary to antecedent mobile elements and target invading nucleic acids. CRISPR clusters are transcribed and processed into CRISPR RNA (crRNA). Functions as a ssRNA-specific endoribonuclease. Involved in the integration of spacer DNA into the CRISPR cassette. In Thermofilum pendens (strain DSM 2475 / Hrk 5), this protein is CRISPR-associated endoribonuclease Cas2.